Consider the following 43-residue polypeptide: uncharacterized protein (43 aa).

The first 22 residues, 1–22 (MKRKIIAIGIFFRLFIIHIHFS), serve as a signal peptide directing secretion.

This is an uncharacterized protein from Schizosaccharomyces pombe (strain 972 / ATCC 24843) (Fission yeast).